The chain runs to 562 residues: Delta-1-pyrroline-5-carboxylate dehydrogenase, mitochondrial (562 aa).

The N-terminal 23 residues, 1-23, are a transit peptide targeting the mitochondrion; that stretch reads MLPLPSLRRSLLSHAWRGAGLRW. K30 carries the post-translational modification N6-succinyllysine. A Phosphoserine modification is found at S43. At K51 the chain carries N6-acetyllysine. N6-acetyllysine; alternate is present on residues K92, K98, K113, K129, and K174. Residues K92, K98, K113, K129, and K174 each carry the N6-succinyllysine; alternate modification. Residues S207, K232, and 285 to 289 contribute to the NAD(+) site; that span reads GSVPT. E313 (proton acceptor) is an active-site residue. An N6-acetyllysine modification is found at K317. K346 bears the N6-succinyllysine mark. Catalysis depends on C347, which acts as the Nucleophile. At K357 the chain carries N6-acetyllysine; alternate. An N6-succinyllysine; alternate modification is found at K357. Residues K364 and K375 each carry the N6-acetyllysine modification. K394 is subject to N6-succinyllysine. Position 446 (E446) interacts with NAD(+). Position 461 is an N6-acetyllysine (K461). K508 is subject to N6-acetyllysine; alternate. The residue at position 508 (K508) is an N6-succinyllysine; alternate. Residue S512 participates in substrate binding. 2 positions are modified to N6-acetyllysine: K530 and K551.

It belongs to the aldehyde dehydrogenase family. Homodimer. Acetylation of Lys-98, Lys-113 and Lys-401 is observed in liver mitochondria from fasted mice but not from fed mice.

Its subcellular location is the mitochondrion matrix. The enzyme catalyses L-glutamate 5-semialdehyde + NAD(+) + H2O = L-glutamate + NADH + 2 H(+). It functions in the pathway amino-acid degradation; L-proline degradation into L-glutamate; L-glutamate from L-proline: step 2/2. In terms of biological role, irreversible conversion of delta-1-pyrroline-5-carboxylate (P5C), derived either from proline or ornithine, to glutamate. This is a necessary step in the pathway interconnecting the urea and tricarboxylic acid cycles. The preferred substrate is glutamic gamma-semialdehyde, other substrates include succinic, glutaric and adipic semialdehydes. The polypeptide is Delta-1-pyrroline-5-carboxylate dehydrogenase, mitochondrial (Aldh4a1) (Mus musculus (Mouse)).